An 807-amino-acid polypeptide reads, in one-letter code: MFSAGAESLLHQAREIQDEELRRFCSRVTKLLQEAPGPATVDALQRLFLIVSATKYPRRLEKMCVDLLQTTLCLPASPEQLQVLCAAILREMSPFNDLALSCDHTPNTRQLSLVASVLLAQGDRKGEIRCVSQRIFKILENRQPEGPSVRPLLPILSKVIGLAPGILMEDQTNLLSKRLVDWLRYASIQQGLPYSGGFFSTPRTRQPGPITEVDGAVASDFFTVLSTGQHFTEDQWVNMQAFSMLRKWLLHSGPEDPCSPDADDKSELEGSTLSVLSAASTASRLLPPRERLREVAFEYCQRLLEQSNRRALRKGDSDLQKACLVEAVSVLDVLCRQDPSFLYRTLSCLKALHRRLGEDPGSERALVPLAQFFLNHGEAAAMDAEAVYGQLLRGLPSERFHSPTLAFEVIHFCTHNLALFDSHFLSLLRLSFPSLFKFLAWNSPPLTAEFVVLLPALVDAGTAVEMLHALLDLPCLTAALDLQLRSTQTPSERLLWDISLRVPSCLEAFQDPQFQGLFRHLLRTKASGSTERLTPLHQVLKPMASCARVTQCAEAVPVLLQAFFSAVTQTADGALINQLALLLLERSDSLYPVPQYEARVHGVLSSQLLVLCKLKPSLVVELSRELLEFVGSVSSIHSRASVFTCVVWAIGEYLSVTWDKRCTAEQINKFFEALEALLFEVTQSRPLADLPCCPPEVVTALMTTLTKLASRSQDLIPRVSLFLSKMRTLAQNPATSSVHSEEGAESIRTRASELLTLLKMPSVAQFVFTPPAGVCQPRYHRDTNVALPLALRTVSRLVEKEAGLLPG.

In terms of assembly, probably part of the adaptor protein complex 5 (AP-5) a tetramer composed of AP5B1, AP5M1, AP5S1 and AP5Z1. Interacts with ZFYVE26 and SPG11.

It localises to the cytoplasm. It is found in the nucleus. Its function is as follows. As part of AP-5, a probable fifth adaptor protein complex it may be involved in endosomal transport. This is AP-5 complex subunit zeta-1 (Ap5z1) from Mus musculus (Mouse).